Reading from the N-terminus, the 431-residue chain is MAKNVVVVGCQWGDEGKGKLVDLLTDRVGAVVRFQGGHNAGHTLVIKGKKTILHLVPSGILRNNVLCVIGNGVVLSPSALMEEIRMLEQEGVPAQERLKISPACPLVLPYHVALDQARETARGERAIGTTGRGIGPAYEDKVARRTLRVGDLSDENRFAANLAEIMDYHNFILRDYYQAEVVSYEQVLEQALEFKAKFSHLVTDVPMLLAKLRREGKNILFEGAQGAFLDIDHGTYPFVTSSNTTAGSAATGSGVGPHDLDCVVGITKAYATRVGHGPFPTELEDDTGAHLAQRGQEFGATTHRPRRCGWLDLVALRRAAIINSISSLCITKLDVLDGLKRLCLCVAYHYNEEQCSEMPLDSDALVRCKPIYMELLGWQESTVGITEYEQLPLAARLYLEKIEELSGVPIDIISTGADREQTIILRDPYGI.

GTP is bound by residues 13–19 (GDEGKGK) and 41–43 (GHT). Asp-14 serves as the catalytic Proton acceptor. Asp-14 and Gly-41 together coordinate Mg(2+). IMP is bound by residues 14–17 (DEGK), 39–42 (NAGH), Thr-130, Arg-144, Gln-225, Thr-240, and Arg-304. His-42 acts as the Proton donor in catalysis. 300 to 306 (ATTHRPR) serves as a coordination point for substrate. GTP-binding positions include Arg-306, 332–334 (KLD), and 414–416 (STG).

Belongs to the adenylosuccinate synthetase family. Homodimer. The cofactor is Mg(2+).

Its subcellular location is the cytoplasm. It catalyses the reaction IMP + L-aspartate + GTP = N(6)-(1,2-dicarboxyethyl)-AMP + GDP + phosphate + 2 H(+). It functions in the pathway purine metabolism; AMP biosynthesis via de novo pathway; AMP from IMP: step 1/2. In terms of biological role, plays an important role in the de novo pathway of purine nucleotide biosynthesis. Catalyzes the first committed step in the biosynthesis of AMP from IMP. The sequence is that of Adenylosuccinate synthetase from Nitrosococcus oceani (strain ATCC 19707 / BCRC 17464 / JCM 30415 / NCIMB 11848 / C-107).